Here is a 142-residue protein sequence, read N- to C-terminus: Large ribosomal subunit protein uL13 (142 aa).

It belongs to the universal ribosomal protein uL13 family. Part of the 50S ribosomal subunit.

This protein is one of the early assembly proteins of the 50S ribosomal subunit, although it is not seen to bind rRNA by itself. It is important during the early stages of 50S assembly. This is Large ribosomal subunit protein uL13 from Caldicellulosiruptor bescii (strain ATCC BAA-1888 / DSM 6725 / KCTC 15123 / Z-1320) (Anaerocellum thermophilum).